A 202-amino-acid chain; its full sequence is Arenicin-2 (202 aa).

Residues 1-25 (MTSTQSVAVYATLILAIFCFNDIHC) form the signal peptide. Residues 26-181 (DPIAEARAAA…SGDNNEPEKR (156 aa)) constitute a propeptide that is removed on maturation. Residues 73–168 (GDGVEGSVMV…ACQGKSVYWL (96 aa)) form the BRICHOS domain. Cystine bridges form between cysteine 100-cysteine 160 and cysteine 184-cysteine 201.

Its function is as follows. Has antimicrobial activity against the Gram-negative bacteria E.coli and P.mirabilis, the Gram-positive bacterium L.monocytogenes and the yeast C.albicans. This Arenicola marina (Lugworm) protein is Arenicin-2.